The following is a 493-amino-acid chain: Transcript termination protein A18 (493 aa).

One can recognise a Helicase ATP-binding domain in the interval 100-256 (MIESKRPLYI…NSIINIAKLS (157 aa)). 113–120 (LACGFGKT) contacts ATP. The DESH box motif lies at 206 to 209 (DESH).

It belongs to the helicase family. Poxviruses subfamily. In terms of assembly, interacts with G2. Might be part of a transcription complex composed at least of G2, A18, and H5.

Its subcellular location is the virion. DNA helicase which seems to act as a postreplicative transcription termination factor. Involved in ATP-dependent release of nascent RNA. Forms a stable complex with single-stranded DNA, and to a lesser extent RNA. The chain is Transcript termination protein A18 from Homo sapiens (Human).